The sequence spans 108 residues: Protein FMC1 homolog (108 aa).

It belongs to the FMC1 family.

In Caenorhabditis elegans, this protein is Protein FMC1 homolog.